The chain runs to 143 residues: Immunity protein CdiI (143 aa).

As to quaternary structure, interacts with cognate CdiA-CT but not non-cognate CdiA-CT from E.coli strain 536 / UPEC.

Its function is as follows. Immunity protein component of a toxin-immunity protein module, which functions as a cellular contact-dependent growth inhibition (CDI) system. CDI modules allow bacteria to communicate with and inhibit the growth of closely related neighboring bacteria in a contact-dependent fashion. Protects cells against the DNase activity of CdiA, its cognate toxin protein, but not against non-cognate CdiA from E.coli strain 536 / UPEC. The sequence is that of Immunity protein CdiI (cdiI) from Dickeya dadantii (strain 3937) (Erwinia chrysanthemi (strain 3937)).